The sequence spans 154 residues: Endoribonuclease YbeY (154 aa).

Zn(2+) contacts are provided by H118, H122, and H128.

This sequence belongs to the endoribonuclease YbeY family. It depends on Zn(2+) as a cofactor.

Its subcellular location is the cytoplasm. Its function is as follows. Single strand-specific metallo-endoribonuclease involved in late-stage 70S ribosome quality control and in maturation of the 3' terminus of the 16S rRNA. The polypeptide is Endoribonuclease YbeY (Macrococcus caseolyticus (strain JCSC5402) (Macrococcoides caseolyticum)).